Reading from the N-terminus, the 282-residue chain is Pantothenate synthetase (282 aa).

30–37 (MGYLHAGH) is an ATP binding site. The Proton donor role is filled by histidine 37. Position 61 (glutamine 61) interacts with (R)-pantoate. Position 61 (glutamine 61) interacts with beta-alanine. Residue 147 to 150 (GKKD) coordinates ATP. (R)-pantoate is bound at residue glutamine 153. ATP-binding positions include valine 176 and 184-187 (MSSR).

Belongs to the pantothenate synthetase family. In terms of assembly, homodimer.

It localises to the cytoplasm. The catalysed reaction is (R)-pantoate + beta-alanine + ATP = (R)-pantothenate + AMP + diphosphate + H(+). It participates in cofactor biosynthesis; (R)-pantothenate biosynthesis; (R)-pantothenate from (R)-pantoate and beta-alanine: step 1/1. Functionally, catalyzes the condensation of pantoate with beta-alanine in an ATP-dependent reaction via a pantoyl-adenylate intermediate. The polypeptide is Pantothenate synthetase (Geotalea uraniireducens (strain Rf4) (Geobacter uraniireducens)).